Reading from the N-terminus, the 115-residue chain is T cell receptor beta variable 7-7 (115 aa).

The N-terminal stretch at 1-21 (MGTSLLCWVVLGFLGTDHTGA) is a signal peptide. The Ig-like domain maps to 22 to 115 (GVSQSPRYKV…SAMYRCASSL (94 aa)). Cysteine 42 and cysteine 111 form a disulfide bridge.

Alpha-beta TR is a heterodimer composed of an alpha and beta chain; disulfide-linked. The alpha-beta TR is associated with the transmembrane signaling CD3 coreceptor proteins to form the TR-CD3 (TcR or TCR). The assembly of alpha-beta TR heterodimers with CD3 occurs in the endoplasmic reticulum where a single alpha-beta TR heterodimer associates with one CD3D-CD3E heterodimer, one CD3G-CD3E heterodimer and one CD247 homodimer forming a stable octameric structure. CD3D-CD3E and CD3G-CD3E heterodimers preferentially associate with TR alpha and TR beta chains, respectively. The association of the CD247 homodimer is the last step of TcR assembly in the endoplasmic reticulum and is required for transport to the cell surface.

It localises to the cell membrane. Its function is as follows. V region of the variable domain of T cell receptor (TR) beta chain that participates in the antigen recognition. Alpha-beta T cell receptors are antigen specific receptors which are essential to the immune response and are present on the cell surface of T lymphocytes. Recognize peptide-major histocompatibility (MH) (pMH) complexes that are displayed by antigen presenting cells (APC), a prerequisite for efficient T cell adaptive immunity against pathogens. Binding of alpha-beta TR to pMH complex initiates TR-CD3 clustering on the cell surface and intracellular activation of LCK that phosphorylates the ITAM motifs of CD3G, CD3D, CD3E and CD247 enabling the recruitment of ZAP70. In turn ZAP70 phosphorylates LAT, which recruits numerous signaling molecules to form the LAT signalosome. The LAT signalosome propagates signal branching to three major signaling pathways, the calcium, the mitogen-activated protein kinase (MAPK) kinase and the nuclear factor NF-kappa-B (NF-kB) pathways, leading to the mobilization of transcription factors that are critical for gene expression and essential for T cell growth and differentiation. The T cell repertoire is generated in the thymus, by V-(D)-J rearrangement. This repertoire is then shaped by intrathymic selection events to generate a peripheral T cell pool of self-MH restricted, non-autoaggressive T cells. Post-thymic interaction of alpha-beta TR with the pMH complexes shapes TR structural and functional avidity. This is T cell receptor beta variable 7-7 from Homo sapiens (Human).